A 303-amino-acid polypeptide reads, in one-letter code: Signal recognition particle receptor FtsY (303 aa).

GTP-binding positions include 108–115 (GVNGAGKT), 190–194 (DTAGR), and 254–257 (TKLD).

This sequence belongs to the GTP-binding SRP family. FtsY subfamily. As to quaternary structure, part of the signal recognition particle protein translocation system, which is composed of SRP and FtsY. SRP is a ribonucleoprotein composed of Ffh and a 4.5S RNA molecule.

It localises to the cell inner membrane. Its subcellular location is the cytoplasm. It carries out the reaction GTP + H2O = GDP + phosphate + H(+). Its function is as follows. Involved in targeting and insertion of nascent membrane proteins into the cytoplasmic membrane. Acts as a receptor for the complex formed by the signal recognition particle (SRP) and the ribosome-nascent chain (RNC). Interaction with SRP-RNC leads to the transfer of the RNC complex to the Sec translocase for insertion into the membrane, the hydrolysis of GTP by both Ffh and FtsY, and the dissociation of the SRP-FtsY complex into the individual components. The polypeptide is Signal recognition particle receptor FtsY (Rickettsia conorii (strain ATCC VR-613 / Malish 7)).